Consider the following 157-residue polypeptide: Ribosomal RNA large subunit methyltransferase H (157 aa).

S-adenosyl-L-methionine is bound by residues Leu73, Gly105, and 124–129; that span reads LSKMTF.

It belongs to the RNA methyltransferase RlmH family. As to quaternary structure, homodimer.

It is found in the cytoplasm. It carries out the reaction pseudouridine(1915) in 23S rRNA + S-adenosyl-L-methionine = N(3)-methylpseudouridine(1915) in 23S rRNA + S-adenosyl-L-homocysteine + H(+). Its function is as follows. Specifically methylates the pseudouridine at position 1915 (m3Psi1915) in 23S rRNA. The polypeptide is Ribosomal RNA large subunit methyltransferase H (Phocaeicola vulgatus (strain ATCC 8482 / DSM 1447 / JCM 5826 / CCUG 4940 / NBRC 14291 / NCTC 11154) (Bacteroides vulgatus)).